A 130-amino-acid polypeptide reads, in one-letter code: Small ribosomal subunit protein uS9 (130 aa).

Belongs to the universal ribosomal protein uS9 family.

The chain is Small ribosomal subunit protein uS9 from Pseudomonas fluorescens (strain Pf0-1).